A 975-amino-acid polypeptide reads, in one-letter code: Importin-11 (975 aa).

The residue at position 1 (methionine 1) is an N-acetylmethionine. The Importin N-terminal domain occupies 28–100; the sequence is AEEQLKQWET…RAGLITNFNE (73 aa). 15 HEAT repeats span residues 123-160, 209-248, 318-356, 422-459, 473-509, 511-548, 555-593, 600-636, 640-677, 683-720, 743-764, 765-804, 819-849, 850-887, and 957-974; these read RQWP…TLAS, ERTL…RLKQ, VQCM…KMAF, QTLT…AVGL, WFKN…VKFK, DLRP…DFEF, PYLE…RVNM, GCLV…GLGA, NLYP…TLEN, PELL…SSTE, EGQV…ILGP, QMFQ…QNTS, QEMD…KLSA, LALL…EDPE, and METV…FLQG. Position 343 is a phosphoserine (serine 343).

Belongs to the importin beta family. As to quaternary structure, interacts with UBE2E3 and RPL12.

It is found in the cytoplasm. The protein localises to the nucleus. Functions in nuclear protein import as nuclear transport receptor. Serves as receptor for nuclear localization signals (NLS) in cargo substrates. Is thought to mediate docking of the importin/substrate complex to the nuclear pore complex (NPC) through binding to nucleoporin and the complex is subsequently translocated through the pore by an energy requiring, Ran-dependent mechanism. At the nucleoplasmic side of the NPC, Ran binds to the importin, the importin/substrate complex dissociates and importin is re-exported from the nucleus to the cytoplasm where GTP hydrolysis releases Ran. The directionality of nuclear import is thought to be conferred by an asymmetric distribution of the GTP- and GDP-bound forms of Ran between the cytoplasm and nucleus. Mediates the nuclear import of UBE2E3, and of RPL12. The sequence is that of Importin-11 (IPO11) from Homo sapiens (Human).